The following is a 94-amino-acid chain: Small ribosomal subunit protein uS19 (94 aa).

A disordered region spans residues 75–94 (SHTRTFKGHAGDKKAAGSKR). A compositionally biased stretch (basic and acidic residues) spans 83 to 94 (HAGDKKAAGSKR).

Belongs to the universal ribosomal protein uS19 family.

In terms of biological role, protein S19 forms a complex with S13 that binds strongly to the 16S ribosomal RNA. The sequence is that of Small ribosomal subunit protein uS19 from Nitrosomonas europaea (strain ATCC 19718 / CIP 103999 / KCTC 2705 / NBRC 14298).